Consider the following 112-residue polypeptide: Abdominal ganglion neuropeptides L5-67 (112 aa).

The signal sequence occupies residues 1–23 (MKTAVLLVCLAYVMAAILSLCAS). A Phenylalanine amide modification is found at Phe-33.

Post-translationally, the prohormone is proteolytically cleaved in 2 steps, yielding first 2 products: luqin and PRMP. In the second step, PRMP is cleaved to yield luqin-B and luqin-C. As to expression, neurons L2-4 and L6, also called giant dorsal LUQ (Left Upper Quadrant) neurons of the abdominal ganglion. Also expressed in smaller neurons in the CNS and in peripheral organs such as the kidney.

The protein localises to the secreted. The chain is Abdominal ganglion neuropeptides L5-67 from Aplysia californica (California sea hare).